The sequence spans 264 residues: Sexual differentiation protein ste4 (264 aa).

The region spanning 11-73 (WNNEAVCNWI…LSAIQSMKKQ (63 aa)) is the SAM domain. A leucine-zipper region spans residues 111-139 (LEKRVEYLETENTKLVKTLNSLNSEFLQL). The Ras-associating domain maps to 176–264 (GSFDLEVNDS…PSFVLSRRSC (89 aa)).

In terms of assembly, homodimer or heterodimer with another leucine-zipper protein.

Its function is as follows. Essential for mating and meiosis. The chain is Sexual differentiation protein ste4 (ste4) from Schizosaccharomyces pombe (strain 972 / ATCC 24843) (Fission yeast).